The following is a 512-amino-acid chain: 2,3-bisphosphoglycerate-independent phosphoglycerate mutase (512 aa).

Mn(2+) is bound by residues aspartate 12 and serine 62. The Phosphoserine intermediate role is filled by serine 62. Substrate-binding positions include histidine 123, 153-154, arginine 185, arginine 191, 260-263, and lysine 333; these read RD and RPDR. Mn(2+)-binding residues include aspartate 400, histidine 404, aspartate 441, histidine 442, and histidine 460.

It belongs to the BPG-independent phosphoglycerate mutase family. Monomer. Requires Mn(2+) as cofactor.

The catalysed reaction is (2R)-2-phosphoglycerate = (2R)-3-phosphoglycerate. Its pathway is carbohydrate degradation; glycolysis; pyruvate from D-glyceraldehyde 3-phosphate: step 3/5. Its function is as follows. Catalyzes the interconversion of 2-phosphoglycerate and 3-phosphoglycerate. The sequence is that of 2,3-bisphosphoglycerate-independent phosphoglycerate mutase from Clostridium perfringens (strain ATCC 13124 / DSM 756 / JCM 1290 / NCIMB 6125 / NCTC 8237 / Type A).